Here is a 429-residue protein sequence, read N- to C-terminus: Histidine--tRNA ligase (429 aa).

This sequence belongs to the class-II aminoacyl-tRNA synthetase family. In terms of assembly, homodimer.

It localises to the cytoplasm. It catalyses the reaction tRNA(His) + L-histidine + ATP = L-histidyl-tRNA(His) + AMP + diphosphate + H(+). The sequence is that of Histidine--tRNA ligase from Pseudomonas aeruginosa (strain LESB58).